The primary structure comprises 228 residues: Uracil-DNA glycosylase (228 aa).

Asp-64 acts as the Proton acceptor in catalysis.

Belongs to the uracil-DNA glycosylase (UDG) superfamily. UNG family. In terms of assembly, monomer.

The protein resides in the cytoplasm. It catalyses the reaction Hydrolyzes single-stranded DNA or mismatched double-stranded DNA and polynucleotides, releasing free uracil.. Functionally, excises uracil residues from the DNA which can arise as a result of misincorporation of dUMP residues by DNA polymerase or due to deamination of cytosine. The polypeptide is Uracil-DNA glycosylase (Escherichia coli O6:H1 (strain CFT073 / ATCC 700928 / UPEC)).